A 520-amino-acid polypeptide reads, in one-letter code: Ribonuclease Y (520 aa).

A helical transmembrane segment spans residues 1–21; that stretch reads MDIITIIIAVIAGIGGGFGIS. Positions 210-276 constitute a KH domain; it reads CVSVFNIESD…RLALHKLVTD (67 aa). One can recognise an HD domain in the interval 336–429; it reads LLQHSREVSK…VQVCDAISGA (94 aa).

This sequence belongs to the RNase Y family.

It is found in the cell membrane. In terms of biological role, endoribonuclease that initiates mRNA decay. This chain is Ribonuclease Y, found in Flavobacterium psychrophilum (strain ATCC 49511 / DSM 21280 / CIP 103535 / JIP02/86).